The chain runs to 447 residues: Multicopper oxidase mco (447 aa).

Residues 1–25 show a composition bias toward basic and acidic residues; the sequence is MMNMKEDKKNTMDMKNMKHHDERKK. Residues 1–28 are disordered; that stretch reads MMNMKEDKKNTMDMKNMKHHDERKKLNS. 12 residues coordinate Cu cation: histidine 107, histidine 109, histidine 147, histidine 149, histidine 375, histidine 378, histidine 380, histidine 428, cysteine 429, histidine 430, histidine 434, and methionine 439.

It belongs to the multicopper oxidase family. Cu cation serves as cofactor.

Its subcellular location is the cytoplasm. May be involved in copper homeostasis and oxidative stress response. The polypeptide is Multicopper oxidase mco (mco) (Staphylococcus epidermidis (strain ATCC 12228 / FDA PCI 1200)).